The chain runs to 295 residues: Glutamate 5-kinase (295 aa).

ATP is bound at residue Lys9. Positions 49, 136, and 148 each coordinate substrate. ATP-binding positions include 168-169 (TD) and 210-216 (TGGMLTK).

This sequence belongs to the glutamate 5-kinase family.

It is found in the cytoplasm. It catalyses the reaction L-glutamate + ATP = L-glutamyl 5-phosphate + ADP. The protein operates within amino-acid biosynthesis; L-proline biosynthesis; L-glutamate 5-semialdehyde from L-glutamate: step 1/2. Functionally, catalyzes the transfer of a phosphate group to glutamate to form L-glutamate 5-phosphate. This chain is Glutamate 5-kinase, found in Neisseria gonorrhoeae (strain NCCP11945).